Reading from the N-terminus, the 600-residue chain is MRVLLVLVACLTYFSGGALAQSCSSYSGDNCPSTCFQGSYDIPCGAQVKYCTEMKDNCGEGGDVKCWKDGSNLPVQTWSSCVPSELFGPNGKFKPSEIPNSSNCPTNCENGVEWVNLCGLSCDAKTACCPDVCQCKGGQTSGGSTTGSQTSGGSTSGGSTTGSQTSGGSTTGSQTSGSQTSGGSCSNTQCPNGFYCQVQGNNAVCVPQQSSTSGGHQNDPCDTVQCPYGYSCESRDGFEAKCTRDEDEPTHRPTHRPKPPHDSDKYLCDNVHCPRGYKCNAKNGVAKCIAGYEIPRVCRNIQCPTGYRCEDHNRNPICVLEERENPDNCLTCNDVNCEASGLVCVMTRARCKVGAAKCCDVQPTCIKPSTIAGSTIASIASTIASTGSTGATSPCSVAQCPTGYVCVAQNNVAVCLPRPTTTTGSTSDSSALGSTSESSASGSSAVSSSASGSSAASSSPSSSAASSSPSSSAASSSPSSSAASSSPSSSASSSSSPSSSASSSSAPSSSASSSSAPSSSASSSSASSSSASSAATTAATTIATTAATTTATTTATTATTTATTTATTTAATIATTTAATTTATTTATTATTTATTTATS.

Positions 21 to 140 (QSCSSYSGDN…DVCQCKGGQT (120 aa)) constitute a DSCP-N domain. The interval 139–178 (QTSGGSTTGSQTSGGSTSGGSTTGSQTSGGSTTGSQTSGS) is disordered. Residues 161–178 (TGSQTSGGSTTGSQTSGS) show a composition bias toward low complexity. 6 Follistatin-like domains span residues 184 to 206 (SCSNTQCPNGFYCQVQGNNAVCV), 220 to 243 (PCDTVQCPYGYSCESRDGFEAKCT), 267 to 289 (LCDNVHCPRGYKCNAKNGVAKCI), 297 to 319 (VCRNIQCPTGYRCEDHNRNPICV), 331 to 359 (TCNDVNCEASGLVCVMTRARCKVGAAKCC), and 394 to 416 (PCSVAQCPTGYVCVAQNNVAVCL). The interval 420–530 (TTTTGSTSDS…ASSSSASSSS (111 aa)) is disordered.

In terms of processing, glycosylated; may contain fucose and GlcNAc-alpha-1-P-Ser.

The protein localises to the spore wall. In Dictyostelium discoideum (Social amoeba), this protein is Spore coat protein SP96 (cotA).